The primary structure comprises 368 residues: Forkhead box protein I2 (368 aa).

The disordered stretch occupies residues 33–54 (QNQQLPQRPAAPPALGYGRNEY). Residues 124–218 (RPPYSYSSLI…DNGNFRRKRK (95 aa)) constitute a DNA-binding region (fork-head). The segment at 243–272 (SLGSDSPRGASALEQSSYGTPESKSRPAGG) is disordered. Polar residues predominate over residues 255–264 (LEQSSYGTPE).

Its subcellular location is the nucleus. Functionally, possible transcriptional activator. The polypeptide is Forkhead box protein I2 (Xenopus tropicalis (Western clawed frog)).